The sequence spans 1358 residues: DNA-directed RNA polymerase subunit beta (1358 aa).

The protein belongs to the RNA polymerase beta chain family. The RNAP catalytic core consists of 2 alpha, 1 beta, 1 beta' and 1 omega subunit. When a sigma factor is associated with the core the holoenzyme is formed, which can initiate transcription.

The catalysed reaction is RNA(n) + a ribonucleoside 5'-triphosphate = RNA(n+1) + diphosphate. In terms of biological role, DNA-dependent RNA polymerase catalyzes the transcription of DNA into RNA using the four ribonucleoside triphosphates as substrates. The polypeptide is DNA-directed RNA polymerase subunit beta (Chromohalobacter salexigens (strain ATCC BAA-138 / DSM 3043 / CIP 106854 / NCIMB 13768 / 1H11)).